Consider the following 208-residue polypeptide: Photosystem I reaction center subunit II-1, chloroplastic (208 aa).

A chloroplast-targeting transit peptide spans 1–45 (MATQAAGIFNSAITTAATSGVKKLHFFSTTHRPKSLSFTKTAIRA). The residue at position 48 (Thr48) is a Phosphothreonine. The segment at 49–72 (DSSAAAAAAPATKEAPVGFTPPQL) is disordered. Residues 50-64 (SSAAAAAAPATKEAP) show a composition bias toward low complexity. Positions 141 to 149 (RLRSKYKIT) are ferredoxin and ferredoxin-oxidoreductase binding.

It belongs to the PsaD family. Interacts with PGRL1A and PGRL1B. In terms of processing, phosphorylated by a threonine specific thylakoid kinase in a light activated and redox-dependent manner.

The protein resides in the plastid. It localises to the chloroplast thylakoid membrane. In terms of biological role, psaD can form complexes with ferredoxin and ferredoxin-oxidoreductase in photosystem I (PS I) reaction center. PSAD may encode the ferredoxin-docking protein. The polypeptide is Photosystem I reaction center subunit II-1, chloroplastic (psaD1) (Arabidopsis thaliana (Mouse-ear cress)).